A 232-amino-acid chain; its full sequence is Mitochondrial import inner membrane translocase subunit Tim21 (232 aa).

Residues 1 to 31 constitute a mitochondrion transit peptide; the sequence is MLPRFLWRPVLCSYRALGSPSRSLTVSYRNL. Residues 96–116 form a helical membrane-spanning segment; sequence FTYFIVVLIGIGVTGGLFYVV.

The protein belongs to the TIM21 family.

Its subcellular location is the mitochondrion membrane. May participate in the translocation of transit peptide-containing proteins across the mitochondrial inner membrane. The chain is Mitochondrial import inner membrane translocase subunit Tim21 (timm21) from Xenopus laevis (African clawed frog).